The sequence spans 463 residues: tRNA dimethylallyltransferase 9 (463 aa).

57-64 (GPTGAGKS) is a binding site for ATP. 59–64 (TGAGKS) contacts substrate. The tract at residues 82–85 (DSVQ) is interaction with substrate tRNA.

The protein belongs to the IPP transferase family. Mg(2+) is required as a cofactor. Expressed ubiquitously, with highest expression in proliferating tissues.

It is found in the cytoplasm. The catalysed reaction is adenosine(37) in tRNA + dimethylallyl diphosphate = N(6)-dimethylallyladenosine(37) in tRNA + diphosphate. Catalyzes the transfer of a dimethylallyl group onto the adenine at position 37 in tRNAs that read codons beginning with uridine, leading to the formation of N6-(dimethylallyl)adenosine (i(6)A). Involved in the cis-type cytokinin biosynthesis. This chain is tRNA dimethylallyltransferase 9 (IPT9), found in Arabidopsis thaliana (Mouse-ear cress).